Reading from the N-terminus, the 359-residue chain is Transcription factor MafA (359 aa).

Ser14 bears the Phosphoserine mark. Residue Lys32 forms a Glycyl lysine isopeptide (Lys-Gly) (interchain with G-Cter in SUMO2) linkage. 2 disordered regions span residues 40–105 (RFCH…VGGA) and 172–226 (GGGA…AGHH). Over residues 46 to 73 (PPGSLSSTPLSTPCSSVPSSPSFCAPSP) the composition is skewed to low complexity. Ser49 carries the post-translational modification Phosphoserine. A phosphothreonine mark is found at Thr53 and Thr57. Ser61 and Ser65 each carry phosphoserine. Positions 74 to 84 (GTGGGAGGGGS) are enriched in gly residues. Over residues 181–209 (GHHHGAHHTAHHHHSAHHHHHHHHHHGGS) the composition is skewed to basic residues. A compositionally biased stretch (gly residues) spans 210 to 224 (GHHGGGAGHGGGGAG). Positions 260–285 (RLKQKRRTLKNRGYAQSCRFKRVQQR) are basic motif. The bZIP domain maps to 260–323 (RLKQKRRTLK…DLYKEKYEKL (64 aa)). Residues 288-309 (LESEKCQLQSQVEQLKLEVGRL) are leucine-zipper. Residues 322–359 (KLAGRGGPGGAGGAGFPREPSPAQAGPGAAKGAPDFFL) form a disordered region. A compositionally biased stretch (gly residues) spans 325-336 (GRGGPGGAGGAG). Low complexity predominate over residues 343 to 359 (PAQAGPGAAKGAPDFFL).

It belongs to the bZIP family. Maf subfamily. In terms of assembly, forms homodimers. Interacts with NEUROD1 and PDX1. May interact with MAFB, FOS, JUN and PCAF. In terms of processing, ubiquitinated, leading to its degradation by the proteasome. Post-translationally, phosphorylated at tyrosines. Expressed in brain, lung, spleen, pancreas and kidney. In the pancreas, expressed in the insulin-producing beta-cells of the islets of Langerhans (at protein level). Also expressed in the eye.

The protein resides in the nucleus. Transcriptional factor that activates insulin gene expression. Acts synergistically with NEUROD1/BETA2 and PDX1. Binds the insulin enhancer C1/RIPE3b element. Binds to consensus TRE-type MARE 5'-TGCTGACTCAGCA-3' DNA sequence. The protein is Transcription factor MafA (Mafa) of Mus musculus (Mouse).